Consider the following 197-residue polypeptide: MRSATIKRKTKETDIEVAVNLDGTGVVNIATGIGFFDHMLDLLARHSRIDMTVKAVGDLHIDFHHTTEDVGIALGQAVRQALGDMAGITRYASIHMPMDETLTRVVIDVSGRPMLVFRTTFPRDKIGEFDTELVREWFNAFAMNAGITLHVETLYGENAHHIAESCFKGLARALRSALAIDPRNQGEVPSTKGQLGG.

Belongs to the imidazoleglycerol-phosphate dehydratase family.

The protein localises to the cytoplasm. The enzyme catalyses D-erythro-1-(imidazol-4-yl)glycerol 3-phosphate = 3-(imidazol-4-yl)-2-oxopropyl phosphate + H2O. It functions in the pathway amino-acid biosynthesis; L-histidine biosynthesis; L-histidine from 5-phospho-alpha-D-ribose 1-diphosphate: step 6/9. This chain is Imidazoleglycerol-phosphate dehydratase, found in Bradyrhizobium sp. (strain BTAi1 / ATCC BAA-1182).